We begin with the raw amino-acid sequence, 371 residues long: Photosynthetic reaction center cytochrome c subunit (371 aa).

Met114, Cys127, Cys130, His131, Met153, His167, Cys178, Cys181, His182, Met267, Cys278, Cys281, His282, Cys339, Cys342, and His343 together coordinate heme.

Component of the photosynthetic reaction center composed of protein subunits L (PufL), M (PufM), H (PuhA) and cytochrome C (PufC). The reaction center interacts with light-harvesting antenna complex LH1. Binds 4 heme groups per subunit.

It localises to the cellular chromatophore membrane. In terms of biological role, the reaction center of purple bacteria contains a tightly bound cytochrome molecule which re-reduces the photo oxidized primary electron donor. The sequence is that of Photosynthetic reaction center cytochrome c subunit (pufC) from Roseobacter denitrificans (strain ATCC 33942 / OCh 114) (Erythrobacter sp. (strain OCh 114)).